The following is a 302-amino-acid chain: MYWFKNAMIYRLTKKLDWSEEALQQNLTQNAYHPCGQSDMSRFGWSTPLRGAELLHFSVGKQILLVAHKEEKIIPSHVVKRELDNRIDELEQKENRKLKKTEKQALKDDVVSVLLPRAFSKNQQTAIWINTETNLIYIDAASSKRAEDVLALLRKSLGSLPVVPLAFANEPALMMTNWIARNEMPQYLTALEEAELKAADDKGIIRCKNQPLDSEEILSHLEKGKFITKLALDWETHLSFVLNDDGTLKRLKFADNIREKNDDILKEDYAQRFDADFILMTGELTALTENLLDDLGGEKTRL.

Belongs to the RdgC family.

The protein localises to the cytoplasm. It localises to the nucleoid. In terms of biological role, may be involved in recombination. The chain is Recombination-associated protein RdgC from Actinobacillus succinogenes (strain ATCC 55618 / DSM 22257 / CCUG 43843 / 130Z).